A 170-amino-acid polypeptide reads, in one-letter code: Photosystem I assembly protein Ycf3 (170 aa).

3 TPR repeats span residues 35 to 68 (AFTHYRDGMSAQSEGEYAEALQNYYEAMRLEIDP), 72 to 105 (SYILYNIGLIHTSNGEHAKALEYYFQALERNSSL), and 120 to 153 (GEQAIEEGDPETCEVWFDQAADYWKKAISLAPSN).

This sequence belongs to the Ycf3 family.

The protein localises to the plastid. It localises to the chloroplast thylakoid membrane. Functionally, essential for the assembly of the photosystem I (PSI) complex. May act as a chaperone-like factor to guide the assembly of the PSI subunits. In Anthoceros angustus (Hornwort), this protein is Photosystem I assembly protein Ycf3.